Consider the following 256-residue polypeptide: Ribonuclease 3 (256 aa).

Residues 3 to 125 enclose the RNase III domain; the sequence is LEALQQRLGY…IFGAVFLDGG (123 aa). E38 is a Mg(2+) binding site. Residue D42 is part of the active site. Residues D111 and E114 each coordinate Mg(2+). E114 is a catalytic residue. Residues 152–222 form the DRBM domain; it reads DAKTLLQEYL…AKLALEEAHR (71 aa). Positions 227 to 256 are disordered; that stretch reads LVKRSRAERTGKTRKQATPPDPQLSLRLKE.

This sequence belongs to the ribonuclease III family. In terms of assembly, homodimer. Mg(2+) is required as a cofactor.

It is found in the cytoplasm. It carries out the reaction Endonucleolytic cleavage to 5'-phosphomonoester.. In terms of biological role, digests double-stranded RNA. Involved in the processing of primary rRNA transcript to yield the immediate precursors to the large and small rRNAs (23S and 16S). Processes some mRNAs, and tRNAs when they are encoded in the rRNA operon. Processes pre-crRNA and tracrRNA of type II CRISPR loci if present in the organism. This chain is Ribonuclease 3, found in Ralstonia nicotianae (strain ATCC BAA-1114 / GMI1000) (Ralstonia solanacearum).